Here is a 429-residue protein sequence, read N- to C-terminus: 3-phosphoshikimate 1-carboxyvinyltransferase (429 aa).

The 3-phosphoshikimate site is built by lysine 22, serine 23, and arginine 27. Position 22 (lysine 22) interacts with phosphoenolpyruvate. Phosphoenolpyruvate-binding residues include glycine 94 and arginine 122. Serine 167, glutamine 169, aspartate 315, and lysine 342 together coordinate 3-phosphoshikimate. Glutamine 169 lines the phosphoenolpyruvate pocket. Residue aspartate 315 is the Proton acceptor of the active site. Phosphoenolpyruvate-binding residues include arginine 346 and arginine 388.

The protein belongs to the EPSP synthase family. In terms of assembly, monomer.

It is found in the cytoplasm. It catalyses the reaction 3-phosphoshikimate + phosphoenolpyruvate = 5-O-(1-carboxyvinyl)-3-phosphoshikimate + phosphate. The protein operates within metabolic intermediate biosynthesis; chorismate biosynthesis; chorismate from D-erythrose 4-phosphate and phosphoenolpyruvate: step 6/7. Catalyzes the transfer of the enolpyruvyl moiety of phosphoenolpyruvate (PEP) to the 5-hydroxyl of shikimate-3-phosphate (S3P) to produce enolpyruvyl shikimate-3-phosphate and inorganic phosphate. This is 3-phosphoshikimate 1-carboxyvinyltransferase from Geobacter sp. (strain M21).